We begin with the raw amino-acid sequence, 434 residues long: MTYNQTRSQEAFEQARPLMPGGVNSPVRAYKSVGMTPIFAERGEGSRVYDIDGNEYIDYVLSWGPLILGHRDPVVTKAIQEQAEKGWTFGTPTELETKMAELVIDRVPSIEMVRMVNSGTEATMAALRLARGYTGKTKILKFEGCYHGHGDSLLIKAGSGVATLGLPDSPGVPKELASHTLTVPYNDLDAVRVAFEKYGDDLAGVIVEPAAGNMGFVPPQPGFLEGLREITEQNGALLIFDEVMTGFRVGYNCAQGYFGVTPDLTCLGKVIGGGLPVGAYGGKREIMEQIAPQGPIYQAGTLSGNPLAMIAGYTTLSQLKPEHYEEFERKADRLAEGFTQAGEKYNIPHDTNRAGSMFGFFFTNEKVTNFEKAKSANLEMFRSYYQKMAARGVFLPPSQFEGLFLSTAHTDEDIEKTIAAVEATFKELQEEFSL.

Position 269 is an N6-(pyridoxal phosphate)lysine (Lys-269).

This sequence belongs to the class-III pyridoxal-phosphate-dependent aminotransferase family. HemL subfamily. In terms of assembly, homodimer. The cofactor is pyridoxal 5'-phosphate.

It localises to the cytoplasm. It catalyses the reaction (S)-4-amino-5-oxopentanoate = 5-aminolevulinate. Its pathway is porphyrin-containing compound metabolism; protoporphyrin-IX biosynthesis; 5-aminolevulinate from L-glutamyl-tRNA(Glu): step 2/2. The protein is Glutamate-1-semialdehyde 2,1-aminomutase 2 of Exiguobacterium sp. (strain ATCC BAA-1283 / AT1b).